Consider the following 155-residue polypeptide: Endoribonuclease YbeY (155 aa).

3 residues coordinate Zn(2+): H114, H118, and H124.

It belongs to the endoribonuclease YbeY family. Requires Zn(2+) as cofactor.

Its subcellular location is the cytoplasm. Single strand-specific metallo-endoribonuclease involved in late-stage 70S ribosome quality control and in maturation of the 3' terminus of the 16S rRNA. This chain is Endoribonuclease YbeY, found in Erwinia tasmaniensis (strain DSM 17950 / CFBP 7177 / CIP 109463 / NCPPB 4357 / Et1/99).